Here is a 209-residue protein sequence, read N- to C-terminus: Thymidine kinase (209 aa).

ATP-binding positions include serine 9–threonine 16 and aspartate 88–glutamine 91. Residue glutamate 89 is the Proton acceptor of the active site.

It belongs to the thymidine kinase family. As to quaternary structure, homotetramer.

The protein resides in the cytoplasm. It catalyses the reaction thymidine + ATP = dTMP + ADP + H(+). This is Thymidine kinase from Xanthomonas campestris pv. campestris (strain 8004).